We begin with the raw amino-acid sequence, 76 residues long: Anaredoxin (76 aa).

An HNH domain is found at 24–66; that stretch reads CMVCWEVNSKANGHHLIPYSEGGSADIQNMMTLCPSCHTKYHK.

This sequence belongs to the HNH nuclease family.

In terms of biological role, putative P-450 reductase. In Nostoc sp. (strain PCC 7120 / SAG 25.82 / UTEX 2576), this protein is Anaredoxin.